The following is a 964-amino-acid chain: Protein HIRA (964 aa).

6 WD repeats span residues 10–50 (RHEG…KDNT), 64–103 (DHFGSVNCVRWAKHGRYLASGSDDQVILIHERKAGSGTSE), 123–162 (GHTADVVDLSWSPDDSTLASGSLDNTIHIWNMNNGICTAV), 165–204 (GHTSLVKGVTWDPIGSFIASQSDDKTVMIWRTSDWSLAHK), 259–331 (GHNA…PLFV), and 335–376 (FFSQ…HRLS). The tract at residues 453–490 (SHEDSKKTAGPTADDVKKGNQLSSPVKQREYRRPDGRK) is disordered. The segment covering 479 to 490 (KQREYRRPDGRK) has biased composition (basic and acidic residues). A WD 7 repeat occupies 644 to 685 (LWSDRISGKVTVLAGNANFWAVGCEDGFLQVYTRCGVRAMPA). Residues 920–940 (ASNRKVQRLLNEFMDLLLEYE) are a coiled coil.

Belongs to the WD repeat HIR1 family. Interacts with RS2. More abundant in apices and young leaf primordia than in fully expanded leaf tissues.

The protein localises to the nucleus. In terms of biological role, histone chaperone involved in maintining knox genes silencing throughout leaf development. This is Protein HIRA from Zea mays (Maize).